Here is a 313-residue protein sequence, read N- to C-terminus: Ribose-phosphate pyrophosphokinase (313 aa).

Residues 40 to 42 (DGE) and 98 to 99 (RQ) each bind ATP. Residues histidine 132 and aspartate 172 each coordinate Mg(2+). Residue lysine 195 is part of the active site. D-ribose 5-phosphate-binding positions include arginine 197, aspartate 221, and 225-229 (DTAGT).

The protein belongs to the ribose-phosphate pyrophosphokinase family. Class I subfamily. As to quaternary structure, homohexamer. It depends on Mg(2+) as a cofactor.

The protein localises to the cytoplasm. It catalyses the reaction D-ribose 5-phosphate + ATP = 5-phospho-alpha-D-ribose 1-diphosphate + AMP + H(+). It functions in the pathway metabolic intermediate biosynthesis; 5-phospho-alpha-D-ribose 1-diphosphate biosynthesis; 5-phospho-alpha-D-ribose 1-diphosphate from D-ribose 5-phosphate (route I): step 1/1. Its function is as follows. Involved in the biosynthesis of the central metabolite phospho-alpha-D-ribosyl-1-pyrophosphate (PRPP) via the transfer of pyrophosphoryl group from ATP to 1-hydroxyl of ribose-5-phosphate (Rib-5-P). The protein is Ribose-phosphate pyrophosphokinase of Porphyromonas gingivalis (strain ATCC BAA-308 / W83).